We begin with the raw amino-acid sequence, 317 residues long: Apolipoprotein E (317 aa).

The signal sequence occupies residues Met-1–Thr-18. Repeat copies occupy residues Glu-79 to Gly-100, Pro-101 to Gly-122, Ala-123 to Gly-144, Gln-145 to Val-166, Arg-167 to Glu-188, Arg-189 to Ala-210, Thr-211 to Arg-232, and Gly-233 to Glu-254. The segment at Glu-79–Glu-254 is 8 X 22 AA approximate tandem repeats. The residue at position 142 (Met-142) is a Methionine sulfoxide. The LDL and other lipoprotein receptors binding stretch occupies residues His-157–Arg-167. Val-161–Arg-164 contacts heparin. The lipid-binding and lipoprotein association stretch occupies residues Ala-209 to Met-289. Gly-228–Leu-235 provides a ligand contact to heparin. The tract at residues Ser-265–Gln-317 is homooligomerization. The tract at residues Arg-277–Met-289 is specificity for association with VLDL.

It belongs to the apolipoprotein A1/A4/E family. As to quaternary structure, homotetramer. May interact with ABCA1; functionally associated with ABCA1 in the biogenesis of HDLs. May interact with APP/A4 amyloid-beta peptide; the interaction is extremely stable in vitro but its physiological significance is unclear. May interact with MAPT. May interact with MAP2. In the cerebrospinal fluid, interacts with secreted SORL1. Interacts with PMEL; this allows the loading of PMEL luminal fragment on ILVs to induce fibril nucleation. Post-translationally, APOE exists as multiple glycosylated and sialylated glycoforms within cells and in plasma. The extent of glycosylation and sialylation are tissue and context specific. In terms of processing, glycated in plasma VLDL. Phosphorylated by FAM20C in the extracellular medium.

It localises to the secreted. It is found in the extracellular space. Its subcellular location is the extracellular matrix. The protein localises to the extracellular vesicle. The protein resides in the endosome. It localises to the multivesicular body. APOE is an apolipoprotein, a protein associating with lipid particles, that mainly functions in lipoprotein-mediated lipid transport between organs via the plasma and interstitial fluids. APOE is a core component of plasma lipoproteins and is involved in their production, conversion and clearance. Apolipoproteins are amphipathic molecules that interact both with lipids of the lipoprotein particle core and the aqueous environment of the plasma. As such, APOE associates with chylomicrons, chylomicron remnants, very low density lipoproteins (VLDL) and intermediate density lipoproteins (IDL) but shows a preferential binding to high-density lipoproteins (HDL). It also binds a wide range of cellular receptors including the LDL receptor/LDLR and the very low-density lipoprotein receptor/VLDLR that mediate the cellular uptake of the APOE-containing lipoprotein particles. Finally, APOE also has a heparin-binding activity and binds heparan-sulfate proteoglycans on the surface of cells, a property that supports the capture and the receptor-mediated uptake of APOE-containing lipoproteins by cells. This chain is Apolipoprotein E (APOE), found in Sus scrofa (Pig).